Here is a 557-residue protein sequence, read N- to C-terminus: 2-succinyl-5-enolpyruvyl-6-hydroxy-3-cyclohexene-1-carboxylate synthase (557 aa).

It belongs to the TPP enzyme family. MenD subfamily. In terms of assembly, homodimer. Requires Mg(2+) as cofactor. The cofactor is Mn(2+). Thiamine diphosphate is required as a cofactor.

The catalysed reaction is isochorismate + 2-oxoglutarate + H(+) = 5-enolpyruvoyl-6-hydroxy-2-succinyl-cyclohex-3-ene-1-carboxylate + CO2. It functions in the pathway quinol/quinone metabolism; 1,4-dihydroxy-2-naphthoate biosynthesis; 1,4-dihydroxy-2-naphthoate from chorismate: step 2/7. Its pathway is quinol/quinone metabolism; menaquinone biosynthesis. Its function is as follows. Catalyzes the thiamine diphosphate-dependent decarboxylation of 2-oxoglutarate and the subsequent addition of the resulting succinic semialdehyde-thiamine pyrophosphate anion to isochorismate to yield 2-succinyl-5-enolpyruvyl-6-hydroxy-3-cyclohexene-1-carboxylate (SEPHCHC). The sequence is that of 2-succinyl-5-enolpyruvyl-6-hydroxy-3-cyclohexene-1-carboxylate synthase from Serratia proteamaculans (strain 568).